A 444-amino-acid polypeptide reads, in one-letter code: Tol-Pal system protein TolB (444 aa).

The first 19 residues, 1–19, serve as a signal peptide directing secretion; that stretch reads MRNIIYFILLLLFSFKGYA.

The protein belongs to the TolB family. The Tol-Pal system is composed of five core proteins: the inner membrane proteins TolA, TolQ and TolR, the periplasmic protein TolB and the outer membrane protein Pal. They form a network linking the inner and outer membranes and the peptidoglycan layer.

The protein localises to the periplasm. In terms of biological role, part of the Tol-Pal system, which plays a role in outer membrane invagination during cell division and is important for maintaining outer membrane integrity. This is Tol-Pal system protein TolB from Rickettsia akari (strain Hartford).